Here is a 108-residue protein sequence, read N- to C-terminus: MKTLLLTLVVVTIVCLDLAYTRKCYKTHPYKSEPCAPGENLCYTKTWCDFRCSQLGKAVELGCAATCPTTKPYEEVTCCSTDDCNRFPNWERPRPRPRGLLSSIMDHP.

Positions 1-21 (MKTLLLTLVVVTIVCLDLAYT) are cleaved as a signal peptide. 5 disulfide bridges follow: C24–C42, C35–C63, C48–C52, C67–C78, and C79–C84.

Belongs to the three-finger toxin family. Long-chain subfamily. Type II alpha-neurotoxin sub-subfamily. As to expression, expressed by the venom gland.

It is found in the secreted. In terms of biological role, binds with high affinity to muscular (alpha-1/CHRNA1) and neuronal (alpha-7/CHRNA7) nicotinic acetylcholine receptor (nAChR) and inhibits acetylcholine from binding to the receptor, thereby impairing neuromuscular and neuronal transmission. The polypeptide is Long neurotoxin 43 (Drysdalia coronoides (White-lipped snake)).